Reading from the N-terminus, the 591-residue chain is Aspartate--tRNA ligase (591 aa).

An L-aspartate-binding site is contributed by Glu-173. An aspartate region spans residues 197–200 (QLFK). Arg-219 serves as a coordination point for L-aspartate. ATP-binding positions include 219–221 (RDE) and Gln-228. His-448 serves as a coordination point for L-aspartate. Residue Glu-482 participates in ATP binding. Arg-489 contacts L-aspartate. 534 to 537 (GLDR) is a binding site for ATP.

This sequence belongs to the class-II aminoacyl-tRNA synthetase family. Type 1 subfamily. Homodimer.

It localises to the cytoplasm. The catalysed reaction is tRNA(Asp) + L-aspartate + ATP = L-aspartyl-tRNA(Asp) + AMP + diphosphate. In terms of biological role, catalyzes the attachment of L-aspartate to tRNA(Asp) in a two-step reaction: L-aspartate is first activated by ATP to form Asp-AMP and then transferred to the acceptor end of tRNA(Asp). This chain is Aspartate--tRNA ligase, found in Shewanella sp. (strain MR-4).